We begin with the raw amino-acid sequence, 151 residues long: MLP-like protein 168 (151 aa).

It belongs to the MLP family.

The polypeptide is MLP-like protein 168 (MLP168) (Arabidopsis thaliana (Mouse-ear cress)).